Consider the following 145-residue polypeptide: uncharacterized protein (145 aa).

Residues 1 to 25 (MSENNENDGFNLDPDVKEELEETKS) form a disordered region. Residues 14–25 (PDVKEELEETKS) are compositionally biased toward basic and acidic residues.

This is an uncharacterized protein from His1 virus (isolate Australia/Victoria) (His1V).